The sequence spans 183 residues: Orotate phosphoribosyltransferase (183 aa).

5-phospho-alpha-D-ribose 1-diphosphate is bound by residues R100, K101, K104, H106, and 126-134; that span reads EDVVTTGSS. 2 residues coordinate orotate: T130 and R158.

The protein belongs to the purine/pyrimidine phosphoribosyltransferase family. PyrE subfamily. Homodimer. Mg(2+) serves as cofactor.

It carries out the reaction orotidine 5'-phosphate + diphosphate = orotate + 5-phospho-alpha-D-ribose 1-diphosphate. It functions in the pathway pyrimidine metabolism; UMP biosynthesis via de novo pathway; UMP from orotate: step 1/2. Functionally, catalyzes the transfer of a ribosyl phosphate group from 5-phosphoribose 1-diphosphate to orotate, leading to the formation of orotidine monophosphate (OMP). This chain is Orotate phosphoribosyltransferase, found in Aquifex aeolicus (strain VF5).